We begin with the raw amino-acid sequence, 323 residues long: 4-hydroxy-3-methylbut-2-enyl diphosphate reductase (323 aa).

C13 contacts [4Fe-4S] cluster. Positions 42 and 75 each coordinate (2E)-4-hydroxy-3-methylbut-2-enyl diphosphate. The dimethylallyl diphosphate site is built by H42 and H75. The isopentenyl diphosphate site is built by H42 and H75. Position 97 (C97) interacts with [4Fe-4S] cluster. H125 contributes to the (2E)-4-hydroxy-3-methylbut-2-enyl diphosphate binding site. H125 lines the dimethylallyl diphosphate pocket. H125 provides a ligand contact to isopentenyl diphosphate. The Proton donor role is filled by E127. T168 contacts (2E)-4-hydroxy-3-methylbut-2-enyl diphosphate. A [4Fe-4S] cluster-binding site is contributed by C198. Positions 226, 227, 228, and 270 each coordinate (2E)-4-hydroxy-3-methylbut-2-enyl diphosphate. S226, S227, N228, and S270 together coordinate dimethylallyl diphosphate. Residues S226, S227, N228, and S270 each contribute to the isopentenyl diphosphate site.

The protein belongs to the IspH family. The cofactor is [4Fe-4S] cluster.

The enzyme catalyses isopentenyl diphosphate + 2 oxidized [2Fe-2S]-[ferredoxin] + H2O = (2E)-4-hydroxy-3-methylbut-2-enyl diphosphate + 2 reduced [2Fe-2S]-[ferredoxin] + 2 H(+). The catalysed reaction is dimethylallyl diphosphate + 2 oxidized [2Fe-2S]-[ferredoxin] + H2O = (2E)-4-hydroxy-3-methylbut-2-enyl diphosphate + 2 reduced [2Fe-2S]-[ferredoxin] + 2 H(+). It participates in isoprenoid biosynthesis; dimethylallyl diphosphate biosynthesis; dimethylallyl diphosphate from (2E)-4-hydroxy-3-methylbutenyl diphosphate: step 1/1. Its pathway is isoprenoid biosynthesis; isopentenyl diphosphate biosynthesis via DXP pathway; isopentenyl diphosphate from 1-deoxy-D-xylulose 5-phosphate: step 6/6. Catalyzes the conversion of 1-hydroxy-2-methyl-2-(E)-butenyl 4-diphosphate (HMBPP) into a mixture of isopentenyl diphosphate (IPP) and dimethylallyl diphosphate (DMAPP). Acts in the terminal step of the DOXP/MEP pathway for isoprenoid precursor biosynthesis. The polypeptide is 4-hydroxy-3-methylbut-2-enyl diphosphate reductase (Nitrosomonas europaea (strain ATCC 19718 / CIP 103999 / KCTC 2705 / NBRC 14298)).